Reading from the N-terminus, the 85-residue chain is Putative regulatory protein Dtur_1444 (85 aa).

This sequence belongs to the RemA family.

In Dictyoglomus turgidum (strain DSM 6724 / Z-1310), this protein is Putative regulatory protein Dtur_1444.